A 698-amino-acid polypeptide reads, in one-letter code: Interleukin-17 receptor C (698 aa).

Positions Met1–Leu21 are cleaved as a signal peptide. At Glu22–Arg464 the chain is on the extracellular side. A glycan (N-linked (GlcNAc...) asparagine) is linked at Asn182. Cys190 and Cys202 are oxidised to a cystine. N-linked (GlcNAc...) asparagine glycosylation is found at Asn209, Asn249, Asn255, and Asn259. Cystine bridges form between Cys266–Cys316, Cys268–Cys284, Cys325–Cys334, Cys364–Cys378, Cys406–Cys413, and Cys440–Cys455. The chain crosses the membrane as a helical span at residues Trp465 to Leu485. The Cytoplasmic segment spans residues Lys486 to Glu698. In terms of domain architecture, SEFIR spans Ser496–Asp645.

Homodimer; disulfide-linked. Heterodimer with IL17RA. Heterodimerization with IL17RA is independent of the cytoplasmic tail. Associates with non-glycosylated IL17RA constitutively. Binding of IL17A and IL17F induces association with glycosylated IL17RA. Forms complexes with 2:1 binding stoichiometry: two receptor chains for one interleukin molecule. IL17A homodimer preferentially drives the formation of IL17RA-IL17RC heterodimeric receptor complex, whereas IL17F homodimer forms predominantly complexes with IL17RC homodimer. IL17A-IL17F forms complexes with IL17RA-IL17RC, but with lower affinity when compared to IL17A homodimer. IL17RC chain cannot distinguish between IL17A and IL17F molecules, potentially enabling the formation of topologically distinct complexes. Interacts (through SEFIR domain and extended downstream region) with TRAF3IP2/ACT1 (phosphorylated). As to expression, highly expressed in colonic epithelial cells. Expressed in lung epithelial cells. Expressed in macrophages. Highly expressed in B-1a B cells and at a lower extent in B-1b and B-2 B cells (at protein level).

It localises to the cell membrane. Its function is as follows. Receptor for IL17A and IL17F, major effector cytokines of innate and adaptive immune system involved in antimicrobial host defense and maintenance of tissue integrity. Receptor for IL17A and IL17F homodimers as part of a heterodimeric complex with IL17RA. Receptor for the heterodimer formed by IL17A and IL17B as part of a heterodimeric complex with IL17RA. Has also been shown to be the cognate receptor for IL17F and to bind IL17A with high affinity without the need for IL17RA. Upon binding of IL17F homodimer triggers downstream activation of TRAF6 and NF-kappa-B signaling pathway. Induces transcriptional activation of IL33, a potent cytokine that stimulates group 2 innate lymphoid cells and adaptive T-helper 2 cells involved in pulmonary allergic response to fungi. Promotes sympathetic innervation of peripheral organs by coordinating the communication between gamma-delta T cells and parenchymal cells. Stimulates sympathetic innervation of thermogenic adipose tissue by driving TGFB1 expression. Binding of IL17A-IL17F to IL17RA-IL17RC heterodimeric receptor complex triggers homotypic interaction of IL17RA and IL17RC chains with TRAF3IP2 adapter through SEFIR domains. This leads to downstream TRAF6-mediated activation of NF-kappa-B and MAPkinase pathways ultimately resulting in transcriptional activation of cytokines, chemokines, antimicrobial peptides and matrix metalloproteinases, with potential strong immune inflammation. Primarily induces neutrophil activation and recruitment at infection and inflammatory sites. Stimulates the production of antimicrobial beta-defensins DEFB1, DEFB103A, and DEFB104A by mucosal epithelial cells, limiting the entry of microbes through the epithelial barriers. The chain is Interleukin-17 receptor C (Il17rc) from Mus musculus (Mouse).